The chain runs to 153 residues: MTTLNTTGKVLYKKKMRVGRGIGSGKGKTSGRGVKGQKSRSGVAIKAFEGGQMPLYRRLPKRGFNAIKRYQAVIAIMNLEKIQTFITEKTINSGDVINMALLKKLKLINKNSQKLKILGTGEIKDKVNIEADLISKSAVEKLEKAGGTIQLKK.

The protein belongs to the universal ribosomal protein uL15 family. In terms of assembly, part of the 50S ribosomal subunit.

Its function is as follows. Binds to the 23S rRNA. The sequence is that of Large ribosomal subunit protein uL15 from Pelagibacter ubique (strain HTCC1062).